We begin with the raw amino-acid sequence, 571 residues long: Fumarate reductase (cytochrome) (571 aa).

20 residues coordinate heme c: His-8, Cys-14, Cys-17, His-18, Cys-36, Cys-39, His-40, His-52, His-58, His-61, Cys-68, Cys-71, His-72, Ala-74, His-75, Cys-82, Cys-85, His-86, Asn-91, and Tyr-94. A flavoprotein-like region spans residues 118–571 (ALASAPHDTV…EEAAKYSKKN (454 aa)). FAD contacts are provided by Ala-137, Glu-156, Asn-164, Ala-165, Ala-169, Gly-170, Gly-171, Gly-278, and Gln-338. Gly-170 contributes to the succinate binding site. Positions 365, 377, and 378 each coordinate succinate. Fumarate-binding residues include Thr-377, Glu-378, and Arg-402. The Proton donor role is filled by Arg-402. Lys-431 serves as a coordination point for heme c. Residue His-504 participates in succinate binding. Residue His-504 participates in fumarate binding. The FAD site is built by His-505 and Glu-534. Arg-544 and Gly-547 together coordinate succinate. 2 residues coordinate fumarate: Arg-544 and Gly-547. 2 residues coordinate FAD: Ala-549 and Ile-550.

As to quaternary structure, monomer. The cofactor is FAD. Heme c serves as cofactor.

It is found in the periplasm. It catalyses the reaction 2 Fe(III)-[cytochrome c] + succinate = fumarate + 2 Fe(II)-[cytochrome c] + 2 H(+). Its function is as follows. Flavocytochrome that catalyzes the reduction of fumarate to succinate. Is essential for fumarate respiration during anaerobic growth, acting as the terminal reductase. Receives electrons from the membrane-bound tetraheme c-type cytochrome CymA. In vitro, can use the artificial electron donor methyl viologen. This is Fumarate reductase (cytochrome) (fccA) from Shewanella frigidimarina.